The primary structure comprises 516 residues: Bifunctional purine biosynthesis protein PurH (516 aa).

In terms of domain architecture, MGS-like spans 1–146 (MTRLALLSVS…KNYAHVTVLS (146 aa)).

This sequence belongs to the PurH family.

It catalyses the reaction (6R)-10-formyltetrahydrofolate + 5-amino-1-(5-phospho-beta-D-ribosyl)imidazole-4-carboxamide = 5-formamido-1-(5-phospho-D-ribosyl)imidazole-4-carboxamide + (6S)-5,6,7,8-tetrahydrofolate. It carries out the reaction IMP + H2O = 5-formamido-1-(5-phospho-D-ribosyl)imidazole-4-carboxamide. The protein operates within purine metabolism; IMP biosynthesis via de novo pathway; 5-formamido-1-(5-phospho-D-ribosyl)imidazole-4-carboxamide from 5-amino-1-(5-phospho-D-ribosyl)imidazole-4-carboxamide (10-formyl THF route): step 1/1. It functions in the pathway purine metabolism; IMP biosynthesis via de novo pathway; IMP from 5-formamido-1-(5-phospho-D-ribosyl)imidazole-4-carboxamide: step 1/1. This is Bifunctional purine biosynthesis protein PurH from Rippkaea orientalis (strain PCC 8801 / RF-1) (Cyanothece sp. (strain PCC 8801)).